Reading from the N-terminus, the 493-residue chain is Glutamyl-tRNA(Gln) amidotransferase subunit A (493 aa).

Catalysis depends on charge relay system residues K78 and S158. The active-site Acyl-ester intermediate is the S182.

The protein belongs to the amidase family. GatA subfamily. Heterotrimer of A, B and C subunits.

The catalysed reaction is L-glutamyl-tRNA(Gln) + L-glutamine + ATP + H2O = L-glutaminyl-tRNA(Gln) + L-glutamate + ADP + phosphate + H(+). Allows the formation of correctly charged Gln-tRNA(Gln) through the transamidation of misacylated Glu-tRNA(Gln) in organisms which lack glutaminyl-tRNA synthetase. The reaction takes place in the presence of glutamine and ATP through an activated gamma-phospho-Glu-tRNA(Gln). This chain is Glutamyl-tRNA(Gln) amidotransferase subunit A, found in Beijerinckia indica subsp. indica (strain ATCC 9039 / DSM 1715 / NCIMB 8712).